Consider the following 381-residue polypeptide: L-lactate dehydrogenase (381 aa).

The 380-residue stretch at 1–380 (MIISSANDYR…TRDALVDLSK (380 aa)) folds into the FMN hydroxy acid dehydrogenase domain. A substrate-binding site is contributed by Tyr-24. Positions 106 and 127 each coordinate FMN. Position 129 (Tyr-129) interacts with substrate. Thr-155 serves as a coordination point for FMN. Arg-164 is a substrate binding site. Lys-251 contributes to the FMN binding site. His-275 functions as the Proton acceptor in the catalytic mechanism. A substrate-binding site is contributed by Arg-278. 306–330 (DSGIRNGLDIVRMLALGADATMLGR) serves as a coordination point for FMN.

Belongs to the FMN-dependent alpha-hydroxy acid dehydrogenase family. Requires FMN as cofactor.

It is found in the cell inner membrane. It carries out the reaction (S)-lactate + A = pyruvate + AH2. Its function is as follows. Catalyzes the conversion of L-lactate to pyruvate. Is coupled to the respiratory chain. In Actinobacillus pleuropneumoniae serotype 5b (strain L20), this protein is L-lactate dehydrogenase.